Reading from the N-terminus, the 869-residue chain is Serendipity locus protein H-1 (869 aa).

A compositionally biased stretch (basic and acidic residues) spans 1–17; that stretch reads MEGGKGEGKRMKEEAPS. 2 disordered regions span residues 1–32 and 134–165; these read MEGG…AGTP and FSVT…TPVK. Polar residues predominate over residues 146 to 164; sequence AFTNSPFKKTSSSGTSTPV. 8 consecutive C2H2-type zinc fingers follow at residues 269–293, 299–321, 331–352, 358–380, 386–408, 414–436, 442–464, and 470–493; these read HKCL…AAAH, YRCS…LKTH, KKCP…RKIH, YQCD…ARIH, YECP…QKYH, YRCE…NLVH, FACT…SNIH, and FKCN…RRRH. 2 disordered regions span residues 554–573 and 617–652; these read TSTA…QPQQ and PKQT…SSLE. A compositionally biased stretch (low complexity) spans 630-648; the sequence is APKQLQQKPQLLQQGQPQQ.

As to expression, distribution varies between nurse cells and the oocyte during oogenesis. Weakly expressed in follicle and border cells.

The protein resides in the nucleus. May belong to a complex set of multifingered proteins which play an important role in gene activation or regulation at early embryonic stages through a maximal accumulation of their transcripts (or protein product) in the mature oocyte. The polypeptide is Serendipity locus protein H-1 (wdn) (Drosophila melanogaster (Fruit fly)).